The primary structure comprises 168 residues: Disulfide bond formation protein B 1 (168 aa).

The Cytoplasmic portion of the chain corresponds to 1 to 14 (MNELTSRLNRERRF). A helical transmembrane segment spans residues 15–31 (LVLLGVICLALIGGALY). The Periplasmic segment spans residues 32–49 (MQVVLGEAPCPLCILQRY). An intrachain disulfide couples Cys41 to Cys44. A helical membrane pass occupies residues 50–65 (ALLFIAIFAFIAAAMP). The Cytoplasmic segment spans residues 66–72 (GRKSLTF). The chain crosses the membrane as a helical span at residues 73-89 (FEVLVVLSAIGGIVAAG). Over 90–144 (NHVYILANPMVSCGIDTLQPIVDDLPLAKLWPLAFQVDGFCSTPYPPILGLSLAQ) the chain is Periplasmic. Cys102 and Cys130 are joined by a disulfide. Residues 145–163 (WALVAFVLTTVLVPLGIYR) form a helical membrane-spanning segment. The Cytoplasmic segment spans residues 164–168 (NRRRG).

It belongs to the DsbB family.

Its subcellular location is the cell inner membrane. In terms of biological role, required for disulfide bond formation in some periplasmic proteins. Acts by oxidizing the DsbA protein. The protein is Disulfide bond formation protein B 1 of Pseudomonas entomophila (strain L48).